We begin with the raw amino-acid sequence, 710 residues long: Iron-sulfur clusters transporter ATM1, mitochondrial (710 aa).

The transit peptide at 1-38 (MWLSLPRSGYGSVATLTSKRVLACLTPLRQFSTSPAVS) directs the protein to the mitochondrion. Positions 35–52 (PAVSNANHKNVDNINKSP) are enriched in polar residues. Positions 35-83 (PAVSNANHKNVDNINKSPANDAANNAVEKGDKPTTSPEKLATKAEKSSA) are disordered. The Mitochondrial matrix portion of the chain corresponds to 39–129 (NANHKNVDNI…PKGKTSVKFR (91 aa)). The chain crosses the membrane as a helical span at residues 130–151 (VLVAVALLVGAKLLNVQVPFFF). Residues 130-419 (VLVAVALLVG…LGSVYRDLRQ (290 aa)) enclose the ABC transmembrane type-1 domain. The Mitochondrial intermembrane segment spans residues 152–173 (KEIIDDMNIEWNSATALGVGIT). A helical membrane pass occupies residues 174 to 197 (ALIFSYGAARFGAVLFGELRNAIF). The Mitochondrial matrix segment spans residues 198 to 246 (ASVAQKAIKEVATNVFRHLLKLDMAFHLSRQTGGITRAIDRGTKGISFV). A helical transmembrane segment spans residues 247–270 (LSSMVFHIIPIALEISLVCGILSY). Position 271 (N271) is a topological domain, mitochondrial intermembrane. A helical transmembrane segment spans residues 272–292 (FGWKYALVTGATMVSYAIFTI). Topologically, residues 293 to 358 (TTTSWRTKFR…ASIKIATSLA (66 aa)) are mitochondrial matrix. Residues 298–302 (RTKFR) and 361–364 (NSGQ) contribute to the glutathione site. A helical membrane pass occupies residues 359 to 377 (FLNSGQNLIFSSALTAMMY). Residues 378-392 (MTCCGVADGSLTVGD) are Mitochondrial intermembrane-facing. A helical membrane pass occupies residues 393–414 (LVLVNQLVFQLSVPLNFLGSVY). G411 is a glutathione binding site. The Mitochondrial matrix portion of the chain corresponds to 415–710 (RDLRQSLLDM…AEEKAAKKDV (296 aa)). An ABC transporter domain is found at 453 to 687 (IRFENVTYGY…DGLYKSMWDA (235 aa)). Residues Y462 and 486-497 (GPSGSGKSTILK) contribute to the ATP site.

It belongs to the ABC transporter superfamily. ABCB family. Heavy Metal importer (TC 3.A.1.210) subfamily. Homodimer.

The protein resides in the mitochondrion inner membrane. Performs an essential function in the generation of cytoplasmic iron-sulfur proteins by mediating the ATP-dependent export of Fe/S cluster precursors synthesized by NFS1 and other mitochondrial proteins. Hydrolyzes ATP. Binds glutathione and may function by transporting a glutathione-conjugated iron-sulfur compound. This chain is Iron-sulfur clusters transporter ATM1, mitochondrial, found in Yarrowia lipolytica (strain CLIB 122 / E 150) (Yeast).